A 275-amino-acid chain; its full sequence is 4-deoxy-L-threo-5-hexosulose-uronate ketol-isomerase (275 aa).

Residues H193, H195, E200, and H242 each coordinate Zn(2+).

The protein belongs to the KduI family. Zn(2+) is required as a cofactor.

It catalyses the reaction 5-dehydro-4-deoxy-D-glucuronate = 3-deoxy-D-glycero-2,5-hexodiulosonate. The protein operates within glycan metabolism; pectin degradation; 2-dehydro-3-deoxy-D-gluconate from pectin: step 4/5. Functionally, catalyzes the isomerization of 5-dehydro-4-deoxy-D-glucuronate to 3-deoxy-D-glycero-2,5-hexodiulosonate. This Bacillus licheniformis (strain ATCC 14580 / DSM 13 / JCM 2505 / CCUG 7422 / NBRC 12200 / NCIMB 9375 / NCTC 10341 / NRRL NRS-1264 / Gibson 46) protein is 4-deoxy-L-threo-5-hexosulose-uronate ketol-isomerase.